The following is a 236-amino-acid chain: MLSKGLKRKREEEETMEALSVDSCWLDPSHPAVAQTPPTVASSSLFDLSVVKLHHSLRQSEPDLRHLVLVVNTLRRIQASMEPAPVLPPEPIQPPAPSVADSLLASSDAGLSASMASLLEDLNHIEDLNQAPQPQADEGPPGRSIGGISPNLGALDLLGPATGCLLDDGLEGLFEDIDTSMYDSELWLPASEGLKPGPENGPAKEEPPELDEAELDYLMDVLVGTQALERPPGPGR.

In terms of domain architecture, SERTA spans 38-85; sequence PTVASSSLFDLSVVKLHHSLRQSEPDLRHLVLVVNTLRRIQASMEPAP. Residues 190–211 are disordered; that stretch reads ASEGLKPGPENGPAKEEPPELD.

In terms of assembly, interacts with the PHD-bromodomain of TIF1, TRIM28/TIF1B and p300/CBP. Interacts with E2F1 and TFDP1; modulates transactivation activity of TFDP1/E2F complexes. Also interacts with CDK4. Polyubiquitinated, which promotes proteasomal degradation. In terms of tissue distribution, detected at in testis, lung and, at lower levels, in muscle, liver, spleen, brain and heart.

Functionally, acts at E2F-responsive promoters as coregulator to integrate signals provided by PHD- and/or bromodomain-containing transcription factors. Stimulates E2F1/TFDP1 transcriptional activity. Renders the activity of cyclin D1/CDK4 resistant to the inhibitory effects of CDKN2A/p16INK4A. This chain is SERTA domain-containing protein 1 (Sertad1), found in Mus musculus (Mouse).